Reading from the N-terminus, the 268-residue chain is Hydroxyethylthiazole kinase (268 aa).

Methionine 45 contributes to the substrate binding site. 2 residues coordinate ATP: arginine 121 and threonine 167. Residue glycine 194 participates in substrate binding.

The protein belongs to the Thz kinase family. Requires Mg(2+) as cofactor.

The enzyme catalyses 5-(2-hydroxyethyl)-4-methylthiazole + ATP = 4-methyl-5-(2-phosphooxyethyl)-thiazole + ADP + H(+). It functions in the pathway cofactor biosynthesis; thiamine diphosphate biosynthesis; 4-methyl-5-(2-phosphoethyl)-thiazole from 5-(2-hydroxyethyl)-4-methylthiazole: step 1/1. Functionally, catalyzes the phosphorylation of the hydroxyl group of 4-methyl-5-beta-hydroxyethylthiazole (THZ). In Bacillus cereus (strain ATCC 10987 / NRS 248), this protein is Hydroxyethylthiazole kinase.